The following is a 209-amino-acid chain: uncharacterized protein (209 aa).

The first 19 residues, 1–19 (MGYFPYLAVFVCLLASGDA), serve as a signal peptide directing secretion. Residues asparagine 41 and asparagine 109 are each glycosylated (N-linked (GlcNAc...) asparagine).

As to expression, component of the acid-soluble organic matrix of prismatic shell layers (at protein level).

The protein resides in the secreted. This is an uncharacterized protein from Haliotis asinina (Donkey's ear abalone).